A 261-amino-acid chain; its full sequence is Glucanase inhibitor protein 3 (261 aa).

Positions 1-21 (MKVLSSLAAALIALSAVDVEA) are cleaved as a signal peptide. The 232-residue stretch at 29 to 260 (ILGGGKVPVG…GIEWINSVIK (232 aa)) folds into the Peptidase S1 domain. The cysteines at positions 56 and 72 are disulfide-linked. A glycan (N-linked (GlcNAc...) asparagine) is linked at Asn-108. 2 disulfide bridges follow: Cys-183–Cys-195 and Cys-205–Cys-236.

The protein belongs to the peptidase S1 family.

The protein resides in the secreted. Secreted effector that suppresses host plant glucan elicitor-mediated defense responses. Targets host endoglucanases and inhibits the endoglucanase-mediated release of elicitor-active glucan oligosaccharides from P.sojae cell walls. This is Glucanase inhibitor protein 3 (GIP3) from Phytophthora sojae (strain P6497) (Soybean stem and root rot agent).